Reading from the N-terminus, the 264-residue chain is NADH dehydrogenase [ubiquinone] iron-sulfur protein 3, mitochondrial (264 aa).

The N-terminal 36 residues, 1–36 (MAAAAVARLWWRGILGASALTRGTGRPSVLLLPVRR), are a transit peptide targeting the mitochondrion.

This sequence belongs to the complex I 30 kDa subunit family. In terms of assembly, core subunit of respiratory chain NADH dehydrogenase (Complex I) which is composed of 45 different subunits. Interacts with NDUFAF3. Interacts with RAB5IF. Found in subcomplexes containing subunits NDUFS2, MT-ND1 and NDUFA13.

The protein resides in the mitochondrion inner membrane. The catalysed reaction is a ubiquinone + NADH + 5 H(+)(in) = a ubiquinol + NAD(+) + 4 H(+)(out). Core subunit of the mitochondrial membrane respiratory chain NADH dehydrogenase (Complex I) which catalyzes electron transfer from NADH through the respiratory chain, using ubiquinone as an electron acceptor. Essential for the catalytic activity and assembly of complex I. This Homo sapiens (Human) protein is NADH dehydrogenase [ubiquinone] iron-sulfur protein 3, mitochondrial (NDUFS3).